A 372-amino-acid chain; its full sequence is MNSSCLGLRRTCFLLSVTAAAVLLLLLPRGQPPAAPRRRPPPAGPSRPSPKREARPAGSDVPGDRGGGSGAAGGGRGVAGSPWPSRRVRMGPPGGSAKESLELKDIFIAVKTTRKYHKTRLELLFQTWISRARGQTFIFTDWEDRELRLKAGDHMINTNCSAVHTRQALCCKMSVEYDKFLESGQKWFCHVDDDNYVNPRTLLRLLSAFSPSQDVYVGRPSLDHPIEAADHVQSDGSKTSVKFWFATGGAGFCISRGLALKMSPWASLGNFISTAERVRLPDDCTIGYIIEGLLEVKLLHSPLFHSHLENLQRLQGESVLQQVTLSYGDPENKHNVVSVGGVFGLQQDPTRFKSVHCLLYPDTIWCPNKKMS.

At 1–10 (MNSSCLGLRR) the chain is on the cytoplasmic side. The chain crosses the membrane as a helical; Signal-anchor for type II membrane protein span at residues 11–27 (TCFLLSVTAAAVLLLLL). The Lumenal segment spans residues 28-372 (PRGQPPAAPR…TIWCPNKKMS (345 aa)). The segment covering 30 to 48 (GQPPAAPRRRPPPAGPSRP) has biased composition (pro residues). The disordered stretch occupies residues 30–96 (GQPPAAPRRR…RVRMGPPGGS (67 aa)). The span at 64 to 78 (DRGGGSGAAGGGRGV) shows a compositional bias: gly residues. Arg120 lines the substrate pocket. The N-linked (GlcNAc...) asparagine glycan is linked to Asn159. 2 disulfides stabilise this stretch: Cys160/Cys171 and Cys189/Cys253. Asp193 serves as a coordination point for substrate. A Mn(2+)-binding site is contributed by Asp194. Asp283 is an active-site residue. His307 lines the Mn(2+) pocket. A disulfide bridge links Cys357 with Cys366.

Belongs to the glycosyltransferase 31 family. Mn(2+) is required as a cofactor.

The protein resides in the golgi apparatus membrane. The enzyme catalyses 3-O-(alpha-L-fucosyl)-L-threonyl-[EGF-like domain protein] + UDP-N-acetyl-alpha-D-glucosamine = 3-O-(N-acetyl-beta-D-glucosaminyl-(1-&gt;3)-alpha-L-fucosyl)-L-threonyl-[EGF-like domain protein] + UDP + H(+). It carries out the reaction 3-O-(alpha-L-fucosyl)-L-seryl-[EGF-like domain protein] + UDP-N-acetyl-alpha-D-glucosamine = 3-O-(N-acetyl-beta-D-glucosaminyl-(1-&gt;3)-alpha-L-fucosyl)-L-seryl-[EGF-like domain protein] + UDP + H(+). Its function is as follows. Glycosyltransferase that initiates the elongation of O-linked fucose residues attached to EGF-like repeats in the extracellular domain of Notch molecules. Plays an important role in limb outgrowth, it directs the formation and positioning of the apical ectodermal ridge (AER), one of the key organizer centers of vertebrate limb development. This chain is Beta-1,3-N-acetylglucosaminyltransferase radical fringe (RFNG), found in Gallus gallus (Chicken).